Consider the following 76-residue polypeptide: Conotoxin Vc6.6 (76 aa).

The signal sequence occupies residues 1–22 (MKLTCMVIVAVLFLTANTFVTA). A propeptide spanning residues 23 to 52 (VPHSSNALENLYLKAHHEMNNPKDSELNKR) is cleaved from the precursor. Intrachain disulfides connect cysteine 53–cysteine 67, cysteine 60–cysteine 71, and cysteine 66–cysteine 75.

It belongs to the conotoxin O1 superfamily. In terms of tissue distribution, expressed by the venom duct.

The protein resides in the secreted. The polypeptide is Conotoxin Vc6.6 (Conus victoriae (Queen Victoria cone)).